The following is an 816-amino-acid chain: Probable disease resistance protein At4g33300 (816 aa).

One can recognise an RPW8 domain in the interval 1 to 149 (MAITDFFAGE…SLDRVIQQVG (149 aa)). Positions 95–111 (TLARKMEKLEKTISNFL) form a coiled coil. The NB-ARC domain maps to 191-443 (VKKMMFESQG…LDVLINIWIE (253 aa)). 207–214 (GMGGVGKT) provides a ligand contact to ATP. Residues 399–415 (SRLLRQMEASLDNLDQT) are a coiled coil. 4 LRR repeats span residues 681–704 (SLSC…SKLQ), 705–727 (ALEI…ICEL), 729–751 (GLKY…IGKL), and 753–774 (KLEK…AVSL).

This sequence belongs to the disease resistance NB-LRR family.

Its function is as follows. Probable disease resistance protein. This chain is Probable disease resistance protein At4g33300, found in Arabidopsis thaliana (Mouse-ear cress).